The following is a 328-amino-acid chain: Glycerophosphodiester phosphodiesterase GDPD4 (328 aa).

Residues 35 to 55 traverse the membrane as a helical segment; that stretch reads TILFAVIFLAIFPPLYFHFKL. A GP-PDE domain is found at 73 to 312; sequence PLVCAHGGDS…SDPSMFQGLM (240 aa).

The protein belongs to the glycerophosphoryl diester phosphodiesterase family. In terms of tissue distribution, expressed in rosette and cauline leaves.

It localises to the membrane. It catalyses the reaction a sn-glycero-3-phosphodiester + H2O = an alcohol + sn-glycerol 3-phosphate + H(+). In Arabidopsis thaliana (Mouse-ear cress), this protein is Glycerophosphodiester phosphodiesterase GDPD4.